We begin with the raw amino-acid sequence, 391 residues long: MTRVGILLMNLGGPERIKDVGPFLYNLFSDPEIIRIPIPFFQKPLAWLISTLRSSRSQQAYQSIGGGSPLRRITEQQARELQSELRQRGVNATSYVAMRYWHPFTESAVSDIKADGINQVVVLPLYPQFSISTSGSSFRELRRLREADPQFRKLPIRCIRSWFNNEGYIASMAKLIEDEILLCNDPENAHIFFTAHGVPKSYVEEAGDPYKDEIEDCSILIIDQLEKALGYINPYTLSYQSRVGPEEWLQPYTEDVLAELGESGTKELVVVPISFVSEHIETLQEIDIEYKEIAKEHGIDNFRRVRALDTYPMFIKGLADLVTSCLEGPEISLDEASKLPDRVKLYPQEKWQWGWNNSAEVWNGRVAMFVFIICLLELVIGNGPLHYLGLL.

Fe cation contacts are provided by H196 and E281.

This sequence belongs to the ferrochelatase family.

The protein localises to the cytoplasm. The enzyme catalyses heme b + 2 H(+) = protoporphyrin IX + Fe(2+). It functions in the pathway porphyrin-containing compound metabolism; protoheme biosynthesis; protoheme from protoporphyrin-IX: step 1/1. Its function is as follows. Catalyzes the ferrous insertion into protoporphyrin IX. This chain is Ferrochelatase, found in Prochlorococcus marinus (strain MIT 9211).